Reading from the N-terminus, the 125-residue chain is Secreted RxLR effector protein RXLR-C13 (125 aa).

Positions 1-23 (MVNSLTFTLVVVCLVRSCDGVAA) are cleaved as a signal peptide. The RxLR-dEER motif lies at 43 to 73 (RVLQETATANDDVKKLSTSTKVDSKLNQEIK). A glycan (N-linked (GlcNAc...) asparagine) is linked at N85. The chain crosses the membrane as a helical span at residues 106–123 (FFILATILLFPIAAYMVA).

It belongs to the RxLR effector family.

The protein resides in the secreted. It is found in the host endoplasmic reticulum membrane. Functionally, secreted effector that does not suppress pattern-triggered immunity (PTI) in plant host. The sequence is that of Secreted RxLR effector protein RXLR-C13 from Plasmopara halstedii (Downy mildew of sunflower).